The chain runs to 189 residues: Glycerol-3-phosphate acyltransferase (189 aa).

The next 5 membrane-spanning stretches (helical) occupy residues methionine 1–leucine 21, lysine 50–alanine 70, alanine 81–glycine 101, methionine 111–phenylalanine 131, and leucine 151–valine 171.

Belongs to the PlsY family. As to quaternary structure, probably interacts with PlsX.

The protein resides in the cell inner membrane. The catalysed reaction is an acyl phosphate + sn-glycerol 3-phosphate = a 1-acyl-sn-glycero-3-phosphate + phosphate. It participates in lipid metabolism; phospholipid metabolism. In terms of biological role, catalyzes the transfer of an acyl group from acyl-phosphate (acyl-PO(4)) to glycerol-3-phosphate (G3P) to form lysophosphatidic acid (LPA). This enzyme utilizes acyl-phosphate as fatty acyl donor, but not acyl-CoA or acyl-ACP. The chain is Glycerol-3-phosphate acyltransferase from Pseudomonas entomophila (strain L48).